The chain runs to 119 residues: Large ribosomal subunit protein bL20 (119 aa).

It belongs to the bacterial ribosomal protein bL20 family.

In terms of biological role, binds directly to 23S ribosomal RNA and is necessary for the in vitro assembly process of the 50S ribosomal subunit. It is not involved in the protein synthesizing functions of that subunit. The protein is Large ribosomal subunit protein bL20 of Nitrosococcus oceani (strain ATCC 19707 / BCRC 17464 / JCM 30415 / NCIMB 11848 / C-107).